Reading from the N-terminus, the 331-residue chain is MQYFDIKKSLPVFCSLLITACSGGGGGGSNNSNHQAHPVNQVPAPVLHVAAKPQQHVEQEVIEKKPPVPVTRTASQSSFYSAKAPSQVSHDKRSVHWKGESVSEKEHLDFSYSKDAVFTRHLVTNPNAVYSTDPNLISKDIKYITLTTTGYNQDNKSGPNYELNLLDENIYYGYYRDSQDMNHVENIYVYGFKKDAENQDNLQFLTANYQGEFLFSTATNPNVPVLGKAVLNYKEGKAKGEILERDSNYKLFDIYVNERPNQAILNPVAERLPTSDLIMNTRKNSPDRVTIDLHFIKGQDNQENKYIVGQGGNEKYWGVLGLEKKETKAEK.

An N-terminal signal peptide occupies residues 1–20 (MQYFDIKKSLPVFCSLLITA). A lipid anchor (N-palmitoyl cysteine) is attached at cysteine 21. Cysteine 21 carries S-diacylglycerol cysteine lipidation.

The protein resides in the cell outer membrane. Its subcellular location is the cell surface. This Pasteurella multocida (strain Pm70) protein is Outer membrane lipoprotein PM1514.